We begin with the raw amino-acid sequence, 226 residues long: LexA repressor (226 aa).

The segment at residues 42 to 62 is a DNA-binding region (H-T-H motif); that stretch reads MREIGDAVGLASLSSVTHQLN. Catalysis depends on for autocatalytic cleavage activity residues serine 150 and lysine 187.

The protein belongs to the peptidase S24 family. Homodimer.

The enzyme catalyses Hydrolysis of Ala-|-Gly bond in repressor LexA.. In terms of biological role, represses a number of genes involved in the response to DNA damage (SOS response), including recA and lexA. In the presence of single-stranded DNA, RecA interacts with LexA causing an autocatalytic cleavage which disrupts the DNA-binding part of LexA, leading to derepression of the SOS regulon and eventually DNA repair. This is LexA repressor from Clavibacter sepedonicus (Clavibacter michiganensis subsp. sepedonicus).